A 400-amino-acid polypeptide reads, in one-letter code: GDNF family receptor alpha-3 (400 aa).

The first 31 residues, 1-31 (MVRPLNPRPLPPVVLMLLLLLPPSPLPLAAG), serve as a signal peptide directing secretion. A disulfide bridge links Cys51 with Cys57. Residues Asn95 and Asn148 are each glycosylated (N-linked (GlcNAc...) asparagine). 10 disulfide bridges follow: Cys162-Cys218, Cys169-Cys175, Cys186-Cys196, Cys191-Cys239, Cys220-Cys227, Cys248-Cys316, Cys255-Cys261, Cys272-Cys288, Cys281-Cys340, and Cys318-Cys328. Asn309 is a glycosylation site (N-linked (GlcNAc...) asparagine). Asn374 carries GPI-anchor amidated asparagine lipidation. A propeptide spans 375–400 (PAVRPQPWVPSLFSCTLPLILLLSLW) (removed in mature form).

Belongs to the GDNFR family. In terms of assembly, interacts with ARTN ligand and RET: forms a 2:2:2 ternary complex composed of ARTN ligand, GFRA3 and RET receptor. Interacts with SORL1. Post-translationally, N-glycosylated. In terms of tissue distribution, widely expressed in adult and fetus which exhibit a similar pattern. Essentially not expressed in the central nervous system, but highly expressed in several sensory and sympathetic ganglia of the peripheral nervous system. Moderate expression in many non-neuronal tissues, particularly those of the digestive and urogenital systems, but high expression in stomach and appendix. Several types of glandular tissues show low expression. Very low or no expression detected in the hematopoietic system.

Its subcellular location is the cell membrane. In terms of biological role, receptor for artemin (ARTN), a growth factor that supports the survival of sensory and sympathetic peripheral neurons. ARTN-binding leads to autophosphorylation and activation of the RET receptor. This Homo sapiens (Human) protein is GDNF family receptor alpha-3 (GFRA3).